We begin with the raw amino-acid sequence, 270 residues long: Protein US2 homolog (270 aa).

This sequence belongs to the herpesviridae US2 family.

The sequence is that of Protein US2 homolog (MDV091) from Gallid herpesvirus 2 (strain Chicken/Md5/ATCC VR-987) (GaHV-2).